Reading from the N-terminus, the 111-residue chain is Nucleoid-associated protein NMA1657 (111 aa).

The protein belongs to the YbaB/EbfC family. As to quaternary structure, homodimer.

It localises to the cytoplasm. The protein resides in the nucleoid. Functionally, binds to DNA and alters its conformation. May be involved in regulation of gene expression, nucleoid organization and DNA protection. The protein is Nucleoid-associated protein NMA1657 of Neisseria meningitidis serogroup A / serotype 4A (strain DSM 15465 / Z2491).